The following is a 475-amino-acid chain: Lactate utilization protein B (475 aa).

4Fe-4S ferredoxin-type domains lie at 304 to 334 and 353 to 382; these read GTEFQAALHCIRCAACINVCPVYRHVGGHSY and YEDHKELPYASSLCAACTDACPVKIPLHEL. Residues cysteine 313, cysteine 316, cysteine 319, cysteine 323, cysteine 366, cysteine 369, and cysteine 373 each contribute to the [4Fe-4S] cluster site.

It belongs to the LutB/YkgF family.

Functionally, is involved in L-lactate degradation and allows cells to grow with lactate as the sole carbon source. Has probably a role as an electron transporter during oxidation of L-lactate. This is Lactate utilization protein B from Shouchella clausii (strain KSM-K16) (Alkalihalobacillus clausii).